A 213-amino-acid polypeptide reads, in one-letter code: Methylthioribulose-1-phosphate dehydratase (213 aa).

Residues His104 and His106 each coordinate Zn(2+).

Belongs to the aldolase class II family. MtnB subfamily. Zn(2+) serves as cofactor.

The enzyme catalyses 5-(methylsulfanyl)-D-ribulose 1-phosphate = 5-methylsulfanyl-2,3-dioxopentyl phosphate + H2O. It functions in the pathway amino-acid biosynthesis; L-methionine biosynthesis via salvage pathway; L-methionine from S-methyl-5-thio-alpha-D-ribose 1-phosphate: step 2/6. Catalyzes the dehydration of methylthioribulose-1-phosphate (MTRu-1-P) into 2,3-diketo-5-methylthiopentyl-1-phosphate (DK-MTP-1-P). This Stenotrophomonas maltophilia (strain K279a) protein is Methylthioribulose-1-phosphate dehydratase.